A 182-amino-acid chain; its full sequence is ATP synthase subunit delta (182 aa).

Belongs to the ATPase delta chain family. F-type ATPases have 2 components, F(1) - the catalytic core - and F(0) - the membrane proton channel. F(1) has five subunits: alpha(3), beta(3), gamma(1), delta(1), epsilon(1). F(0) has three main subunits: a(1), b(2) and c(10-14). The alpha and beta chains form an alternating ring which encloses part of the gamma chain. F(1) is attached to F(0) by a central stalk formed by the gamma and epsilon chains, while a peripheral stalk is formed by the delta and b chains.

Its subcellular location is the cell inner membrane. Functionally, f(1)F(0) ATP synthase produces ATP from ADP in the presence of a proton or sodium gradient. F-type ATPases consist of two structural domains, F(1) containing the extramembraneous catalytic core and F(0) containing the membrane proton channel, linked together by a central stalk and a peripheral stalk. During catalysis, ATP synthesis in the catalytic domain of F(1) is coupled via a rotary mechanism of the central stalk subunits to proton translocation. In terms of biological role, this protein is part of the stalk that links CF(0) to CF(1). It either transmits conformational changes from CF(0) to CF(1) or is implicated in proton conduction. The polypeptide is ATP synthase subunit delta (Cytophaga hutchinsonii (strain ATCC 33406 / DSM 1761 / CIP 103989 / NBRC 15051 / NCIMB 9469 / D465)).